The following is a 252-amino-acid chain: Protein IL-40 (252 aa).

Residues Met-1–Ser-18 form the signal peptide. Residues Asn-82 and Asn-177 are each glycosylated (N-linked (GlcNAc...) asparagine).

Expressed in bone marrow, spleen and lymph node.

The protein resides in the secreted. Its function is as follows. Probable B cell-associated cytokine that plays a role in the regulation of humoral immune responses. Involved in lymphocyte B cell development and immunoglobulin/IgA production. The chain is Protein IL-40 from Mus musculus (Mouse).